The following is a 274-amino-acid chain: MAIVKCKPTSPGRRFVVKVVNQELHKGAPHAPLLEKKSKTGGRNNNGRITTRHIGGGHKQHYRLVDFRRNDKDGITATVERIEYDPNRTAHIALLLYADGERRYIIAPKGVSAGDQLIAGALAPIKPGNALQLRNIPVGSTVHGIELKPGKGAQIARSAGASAQLIAREGVYVTLRLRSGEMRKVLSECRATLGEVSNSEHSLRSLGKAGAKRWRGVRPTVRGVAMNPVDHPHGGGEGRTSGGRHPVSPWGFPTKGAKTRGNKRTDKMIVRRRK.

Disordered regions lie at residues 28–54 and 224–274; these read APHA…TRHI and VAMN…RRRK. Positions 263-274 are enriched in basic and acidic residues; sequence KRTDKMIVRRRK.

The protein belongs to the universal ribosomal protein uL2 family. In terms of assembly, part of the 50S ribosomal subunit. Forms a bridge to the 30S subunit in the 70S ribosome.

Its function is as follows. One of the primary rRNA binding proteins. Required for association of the 30S and 50S subunits to form the 70S ribosome, for tRNA binding and peptide bond formation. It has been suggested to have peptidyltransferase activity; this is somewhat controversial. Makes several contacts with the 16S rRNA in the 70S ribosome. This chain is Large ribosomal subunit protein uL2, found in Pseudomonas syringae pv. tomato (strain ATCC BAA-871 / DC3000).